Reading from the N-terminus, the 646-residue chain is MTRSLLWQMVIVLGAILMVNYVLTTLTPQTQEPVVDVSYSRFKTELAADNVAAITFEGNNVVGNLRERTILNRVEGTEEVQSFLRFRTTMPPVTDTRLLDDLEQRKVDVKVRPESKPSPWATAMIYMLPWLLIVGVWWFVIKGMRTRQGPGGGMMGGFSKSGAKMYTKERSRVTFADVAGLDEAKQELMEIIEFLRNPKKFMRLGAKAPRGVLLVGPPGTGKTLMARAVAGEAEVPFFTISASQFIEMFVGVGASRVRDLFNNAKKNAPSIIFIDELDAVGRSRGTGLGGGNDEREQTLNQLLSEMDGFEAHDEVIVMSATNRPDVLDPALLRPGRFDRQVTVERPDWRAREEILKVHTRQVPIDEDVDLQIIARSTPGMCGADLENLVNEAALIAARENAQKVTMQHFEQAKDRVLMGTERKLVMSQQEKRITAYHEAGHTLLARLSPGADPIHKVSIIPRGQALGVTQQLPVDDRYHYSRSYLMTRIAVSLGGRAAEKAIFEEYSTGAQNDLKQATDLAEKMVCQWGMSERVGPMSINRGEEHPFLGRKLASDNAFSQHMAWIIDQEIEKVVKAGEQAADEIIANHLPVLKKLADALLEEEVLDRTRVDEVLRETGIEVQDDPAAHPDGDHVLQGELAGGAVEG.

The Cytoplasmic portion of the chain corresponds to 1 to 4 (MTRS). The chain crosses the membrane as a helical span at residues 5–25 (LLWQMVIVLGAILMVNYVLTT). Topologically, residues 26 to 120 (LTPQTQEPVV…VRPESKPSPW (95 aa)) are periplasmic. The chain crosses the membrane as a helical span at residues 121–141 (ATAMIYMLPWLLIVGVWWFVI). At 142–646 (KGMRTRQGPG…GELAGGAVEG (505 aa)) the chain is on the cytoplasmic side. An ATP-binding site is contributed by 216-223 (GPPGTGKT). Residue His437 participates in Zn(2+) binding. The active site involves Glu438. Residues His441 and Asp513 each contribute to the Zn(2+) site.

It in the central section; belongs to the AAA ATPase family. In the C-terminal section; belongs to the peptidase M41 family. Homohexamer. The cofactor is Zn(2+).

It localises to the cell inner membrane. Acts as a processive, ATP-dependent zinc metallopeptidase for both cytoplasmic and membrane proteins. Plays a role in the quality control of integral membrane proteins. The sequence is that of ATP-dependent zinc metalloprotease FtsH from Syntrophotalea carbinolica (strain DSM 2380 / NBRC 103641 / GraBd1) (Pelobacter carbinolicus).